The primary structure comprises 228 residues: Transmembrane protein 186 (228 aa).

At 1 to 93 (MDMMMMSTRL…RGLRALSRLK (93 aa)) the chain is on the mitochondrial matrix side. Residues 94 to 112 (LLQTGITVVLLPTVYYLHL) form a helical membrane-spanning segment. The Mitochondrial intermembrane portion of the chain corresponds to 113-118 (QGQASV). Residues 119–141 (LVLNRSIGIALFAGVMLYSISHF) form a helical membrane-spanning segment. Residues 142-228 (VRRVVGMMYL…AFGKVFGSLS (87 aa)) lie on the Mitochondrial matrix side of the membrane.

Belongs to the TMEM186 family.

The protein resides in the mitochondrion inner membrane. Its function is as follows. May be required for efficient assembly of the mitochondrial complex I. In Danio rerio (Zebrafish), this protein is Transmembrane protein 186.